The following is a 652-amino-acid chain: DNA ligase (652 aa).

NAD(+) contacts are provided by residues 29 to 33, 78 to 79, and E107; these read DSDYD and SL. The active-site N6-AMP-lysine intermediate is K109. NAD(+) is bound by residues R130, E164, K278, and K302. Residues C395, C398, C413, and C418 each contribute to the Zn(2+) site. The BRCT domain occupies 577–652; the sequence is NSDAALFGLT…IEDEDWLRKF (76 aa).

The protein belongs to the NAD-dependent DNA ligase family. LigA subfamily. It depends on Mg(2+) as a cofactor. Mn(2+) is required as a cofactor.

The enzyme catalyses NAD(+) + (deoxyribonucleotide)n-3'-hydroxyl + 5'-phospho-(deoxyribonucleotide)m = (deoxyribonucleotide)n+m + AMP + beta-nicotinamide D-nucleotide.. DNA ligase that catalyzes the formation of phosphodiester linkages between 5'-phosphoryl and 3'-hydroxyl groups in double-stranded DNA using NAD as a coenzyme and as the energy source for the reaction. It is essential for DNA replication and repair of damaged DNA. The sequence is that of DNA ligase from Streptococcus pyogenes serotype M6 (strain ATCC BAA-946 / MGAS10394).